The chain runs to 494 residues: Alpha-amylase-related protein (494 aa).

The signal sequence occupies residues 1–20 (MFKFALALTLCLAGASLSLA). A Pyrrolidone carboxylic acid modification is found at glutamine 21. An intrachain disulfide couples cysteine 48 to cysteine 104. Ca(2+)-binding residues include asparagine 118, glutamine 169, and aspartate 178. Cysteine 157 and cysteine 171 are joined by a disulfide. Arginine 206 is a chloride binding site. Residue aspartate 208 is the Nucleophile of the active site. Histidine 212 is a Ca(2+) binding site. Catalysis depends on glutamate 245, which acts as the Proton donor. Chloride contacts are provided by asparagine 308 and arginine 343. Intrachain disulfides connect cysteine 376–cysteine 382, cysteine 418–cysteine 441, and cysteine 448–cysteine 460.

The protein belongs to the glycosyl hydrolase 13 family. As to quaternary structure, monomer. Ca(2+) serves as cofactor. Requires chloride as cofactor.

The protein resides in the secreted. It carries out the reaction Endohydrolysis of (1-&gt;4)-alpha-D-glucosidic linkages in polysaccharides containing three or more (1-&gt;4)-alpha-linked D-glucose units.. The protein is Alpha-amylase-related protein (Amyrel) of Drosophila punjabiensis (Fruit fly).